Here is a 1109-residue protein sequence, read N- to C-terminus: Coiled-coil domain-containing protein 158 (1109 aa).

The segment covering 1-12 (MESKACESKNED) has biased composition (basic and acidic residues). Residues 1–31 (MESKACESKNEDLLPSGITSKGGSSSPFFVT) are disordered. Polar residues predominate over residues 17–31 (GITSKGGSSSPFFVT). Coiled coils occupy residues 71–166 (GKEH…MLKD) and 242–828 (VEDQ…QEQE). 2 disordered regions span residues 843–897 (LQGP…DPTR) and 952–1061 (HRSN…TGKT). Composition is skewed to polar residues over residues 862–882 (ASVTRSHSNIPSSQSTTSFLS), 953–970 (RSNNSLRESTEGSKSSET), and 988–998 (SCFTFTSTASP). The span at 999 to 1019 (SGKMSASRSFSSSPKKSPVHS) shows a compositional bias: low complexity. Polar residues-rich tracts occupy residues 1020-1037 (LLTSSAEESVNSTPQYRS) and 1043-1061 (SPTSAKDSQSPSLETTGKT). Residues 1053-1109 (PSLETTGKTCQKLQNRLESLQTLVEDLQLKNQAMSSMIRNQEKRIQKVKDQEKMLLK) are a coiled coil.

The chain is Coiled-coil domain-containing protein 158 (Ccdc158) from Mus musculus (Mouse).